A 144-amino-acid polypeptide reads, in one-letter code: Large ribosomal subunit protein uL15 (144 aa).

Residues 1–48 (MIKLESLQDPSPRKRRTKLLGRGPSSGHGKTSCRGHKGDGSRSGYKRR) form a disordered region.

The protein belongs to the universal ribosomal protein uL15 family. Part of the 50S ribosomal subunit.

Its function is as follows. Binds to the 23S rRNA. The polypeptide is Large ribosomal subunit protein uL15 (Chlamydia abortus (strain DSM 27085 / S26/3) (Chlamydophila abortus)).